The primary structure comprises 234 residues: Ribose-5-phosphate isomerase A (234 aa).

Substrate contacts are provided by residues 35–38 (SGTT), 91–94 (DGAD), and 105–108 (KGGG). E114 (proton acceptor) is an active-site residue. Residue K132 coordinates substrate.

The protein belongs to the ribose 5-phosphate isomerase family. As to quaternary structure, homodimer.

The enzyme catalyses aldehydo-D-ribose 5-phosphate = D-ribulose 5-phosphate. It participates in carbohydrate degradation; pentose phosphate pathway; D-ribose 5-phosphate from D-ribulose 5-phosphate (non-oxidative stage): step 1/1. Catalyzes the reversible conversion of ribose-5-phosphate to ribulose 5-phosphate. This is Ribose-5-phosphate isomerase A from Methanococcus aeolicus (strain ATCC BAA-1280 / DSM 17508 / OCM 812 / Nankai-3).